A 230-amino-acid polypeptide reads, in one-letter code: Sugar fermentation stimulation protein homolog (230 aa).

Belongs to the SfsA family.

This is Sugar fermentation stimulation protein homolog from Clostridium perfringens (strain SM101 / Type A).